A 105-amino-acid polypeptide reads, in one-letter code: Large ribosomal subunit protein uL24 (105 aa).

The protein belongs to the universal ribosomal protein uL24 family. In terms of assembly, part of the 50S ribosomal subunit.

One of two assembly initiator proteins, it binds directly to the 5'-end of the 23S rRNA, where it nucleates assembly of the 50S subunit. Functionally, one of the proteins that surrounds the polypeptide exit tunnel on the outside of the subunit. The protein is Large ribosomal subunit protein uL24 of Clostridium botulinum (strain 657 / Type Ba4).